Here is a 455-residue protein sequence, read N- to C-terminus: MSQRKYFGTDGIRGHVGLSNINPEFVLKLGWAVGCVLANGARKKVVIGKDTRVSGYMLESALEAGLSAAGVDVALLGPMPTPGIAYLTQTLRANAGIVISASHNLFEDNGIKFFSADGGKLPDSVELAIEAQLEKQLQTVPSAKLGKATRINDAAGRYIEFCKSTIPSLSRLSNLKIVVDCANGATYHIAPNVFSELGADVVPIGIKPDGFNINQECGSTAPELLREKVIAVGADIGIGLDGDGDRVILVDSLGNLVDGDQIIYIIAKDRHQRGVLHGGVVGTLMSNYGLELAITSLGVPFQRSKVGDRYVLEMLREKDWKIGGETSGHIVCLDKTTTGDGIVAALQVLSIMVKQNKALHELTAGIQLLPQTLVNLKTNNAALLASNPDVIQAVKNLEKHLNGEGRVLLRPSGTEPLLRVMVEGANASIVKQQAQMLCDDISQIDKKMTESLPST.

Residue serine 102 is the Phosphoserine intermediate of the active site. The Mg(2+) site is built by serine 102, aspartate 241, aspartate 243, and aspartate 245. Serine 102 bears the Phosphoserine mark.

It belongs to the phosphohexose mutase family. Mg(2+) is required as a cofactor. Activated by phosphorylation.

The enzyme catalyses alpha-D-glucosamine 1-phosphate = D-glucosamine 6-phosphate. Its function is as follows. Catalyzes the conversion of glucosamine-6-phosphate to glucosamine-1-phosphate. The chain is Phosphoglucosamine mutase from Legionella pneumophila (strain Lens).